The chain runs to 599 residues: Elongation factor 4 (599 aa).

The region spanning 5–187 (SHIRNFSIIA…RLVHTIPAPE (183 aa)) is the tr-type G domain. GTP-binding positions include 17 to 22 (DHGKST) and 134 to 137 (NKMD).

It belongs to the TRAFAC class translation factor GTPase superfamily. Classic translation factor GTPase family. LepA subfamily.

Its subcellular location is the cell inner membrane. It catalyses the reaction GTP + H2O = GDP + phosphate + H(+). Its function is as follows. Required for accurate and efficient protein synthesis under certain stress conditions. May act as a fidelity factor of the translation reaction, by catalyzing a one-codon backward translocation of tRNAs on improperly translocated ribosomes. Back-translocation proceeds from a post-translocation (POST) complex to a pre-translocation (PRE) complex, thus giving elongation factor G a second chance to translocate the tRNAs correctly. Binds to ribosomes in a GTP-dependent manner. The polypeptide is Elongation factor 4 (Pseudomonas putida (strain ATCC 47054 / DSM 6125 / CFBP 8728 / NCIMB 11950 / KT2440)).